Consider the following 388-residue polypeptide: Nitric oxide reductase FlRd-NAD(+) reductase (388 aa).

It belongs to the FAD-dependent oxidoreductase family. FAD is required as a cofactor.

The protein resides in the cytoplasm. The enzyme catalyses 2 reduced [nitric oxide reductase rubredoxin domain] + NAD(+) + H(+) = 2 oxidized [nitric oxide reductase rubredoxin domain] + NADH. Its pathway is nitrogen metabolism; nitric oxide reduction. In terms of biological role, one of at least two accessory proteins for anaerobic nitric oxide (NO) reductase. Reduces the rubredoxin moiety of NO reductase. The chain is Nitric oxide reductase FlRd-NAD(+) reductase from Aeromonas hydrophila subsp. hydrophila (strain ATCC 7966 / DSM 30187 / BCRC 13018 / CCUG 14551 / JCM 1027 / KCTC 2358 / NCIMB 9240 / NCTC 8049).